The primary structure comprises 71 residues: MSVYRRRLSPLKPNQVIDYQDVELLRTFITDQGKILPRRVTGLTAKQQRAVTKAIKQARVLALLPFVNRES.

It belongs to the bacterial ribosomal protein bS18 family. Part of the 30S ribosomal subunit.

It is found in the plastid. It localises to the cyanelle. This Cyanophora paradoxa protein is Small ribosomal subunit protein bS18c (rps18).